We begin with the raw amino-acid sequence, 2346 residues long: MPSIVIDDADRLRQLWTQLVTDVTPSHLPSGLFSKRETKSTVGRLNVPMQLSAIYDCCQQCDVSPLNVVQAAWTAVLRSYSGADNVMFAGIGMNPRSTKQQWTNTSVSLARLEQDSSVISVLDTTQEEGLLQAESMVSVPEALDIFSSLEPKPCNSAIWLKDAQSKSELSLTDVVNEKTFDYAVQIDASLTQLDLVFHKPTVSRSQAQYIASTFADYLQSVCLDPYQTASTVCHPSELDMMQIDTWNRILPKGSEVCVDQLIESAAQKSPDAQALVGWDGEMSYSQFNQAANKMAAYFDSVGVQRGELVPICFEKSVWTIVTMIGLWKLGAGWVPLDPKHPRQRLETIIESVGARTVIASASNKDLVQDIASQVLILDPSQIQSAPEVDFKSRSQPHDTSFVMFTSGSTGKPKGVVHDHASVASSALNHASAMNISNNTRALQFGAYTFIISTFEIFTTLIFGGCLCIPSDHDRHTDIRPAIRSFEANWAIFTPSFARSLHHEDIPSLDTLLVAGEAVAQDIIDRWAPVAQLINIYGASECSVVMIGRMVADTPRSCIGRATGGLSWLVDPNDHDRLVPIGSVGELVIEGPILARGYLADPEKTQAVYIENPVWASQSGNTRRFYKTGDLARYGDDGRVHLIGRKDLQVKIRGQRVELTEIEAHMRAIDNSVKTAVAMVRPGGKAMLAAFISNQSGFGPEFPHPFYSAPDDKQSVVSLAGQMSKKLTLQLPPYMIPSVFLPLAYMPLTASGKTDRRLIASFGDSLTLTELAAVAGNGKVTERRMPTTTTEMTLRQIWAEILHCPVDEIGAEDNFFHLGGDSIEAMNLTRRCRAEGFQLQVGDILGNLVLSDMAKAMTSTRSLKPSITTPFELLGDDTDAVRANILSATGLPAGLLQDAYPCSPLQMGLMALSAKIPGSYVARHTLELPSSVTVGRFKEVWGMIVESNDVLRTRIVETDEYGSVQVVNRAPLVWAHDTDLAKYIELDEKIPMQIGDALAHFGIIAGPTNTFVLTIHHSIYDGMSLEMIFNDLVHAFEGVVPPVRTQFRDFIKEVVERNADKATEEYWRGEFAEGDMTTFPSLPSASHQPLANDSFVHTLQLNRKGPSDFTSATLIRAAWSLVQARYCDSPETVFGCTLSGRNAPVPGVEDVVGAVIATVPIKAKVDGEQPVAEWLQQINSHSVEMTPAQNYGLQNIARVAEGAAAACNFQSLLVIQPATSVAEDSIMQPFSAPQANFSTVALTLECSLAVDGSIQIHVHFDDTVLPRLEVQRIVRQFEHVLQQLASAPAGKLSDIEIISPQDKENLLQWNRDLAEPVNECVHRLISQNNFSQPNAPAICAWDGELTYTELESLSSKLAAHLINVGVGPDVFVPLCFEKSMWTIVAMLATLKAGGAFVAMDASQPISRMQSVVKDVNAQVVLYSEEQLSRAPGLAAKAIAVGPGMRELNTPRTPPTPVAPSNAAYVIFSSGSTGTPKGSVIEHRAFCTAAVSQKEGLQMGSRVLQFASYAFDASILEILSTLVQGGCVCVPSESERRGNIAEAITRMNVDWAVLTPSFVNTIDPSSVPTLSTLALAGEAMSAAHVAAWTPYVRLVNGYGPSECCVCTTSNRRVLPGTASNNIGTAVGSASWITDRDDHNKLAPIGAIGELLIEGNILARHYLNNPEKTDAAFITQPAWLPGHRSTRVYKTGDLVKYAPDGSILFIGRKDTQVKIRGQRVELGEIEYHLNLPADVSQSVVSYPKSGLYAQKLVGILELNSTAGSDLSVVPSAEFQRSGFQLSSLTHTLSETLPVHMIPVIWIVVRKIPSSSSTKIDRKVVDQWLTKLPSNFEPTLGITREGPTTSALRASEDKALAISKKIESLVNREDSPLHGRDFNISSMGIDSVQVISLASFIKQSYGVKVDVSRVLDGQMTVRGLAAFIDAELSGTVQEALPAFDAMKEASALVNDIIKNSMPQKTVFVTGGTGFLGTQILRQLCDRPDVGRVIAHVRANSPSDAFIRIKDAAVRAQWWSDYYLTKLDVWCGNLASPKLGLKPKQWASLSGESPNDGLVNGIIHAGAAVNWNAGTEILRAANVNSTAELIKAAISSPARPRLSYVSGGSRWSVGENDQDIANEIAHANGYAQTKYLSELLVKQFAAKYPNQFAIVKPGLILGTPEEGVANTDDFVWRLASGVVDACAFSDDYANAWMYVTSSTRVAEETIAQVFCPAGSMKTVTYMTEGITEREFWEIFHGELKYPLRKVDHETWMETMRKSIQKDTSSHPLWPVSQVFDALQGRLGGEPLQDASFVSPSQKQHVKATIRRNVQFLVEAGFIASPTGKKMKYMADKVFKRSGNVWENVKRMTITA.

The interval 263 to 652 (ESAAQKSPDA…GRKDLQVKIR (390 aa)) is adenylation 1. In terms of domain architecture, Carrier 1 spans 784-860 (MPTTTTEMTL…DMAKAMTSTR (77 aa)). S821 carries the post-translational modification O-(pantetheine 4'-phosphoryl)serine. The segment at 896-1306 (QDAYPCSPLQ…ISPQDKENLL (411 aa)) is condensation. An adenylation 2 region spans residues 1330–1713 (SQPNAPAICA…GRKDTQVKIR (384 aa)). The Carrier 2 domain maps to 1842-1924 (SALRASEDKA…GLAAFIDAEL (83 aa)). S1883 carries the post-translational modification O-(pantetheine 4'-phosphoryl)serine. The reductase (R) domain stretch occupies residues 1960–2311 (VTGGTGFLGT…RNVQFLVEAG (352 aa)).

It belongs to the NRP synthetase family.

The catalysed reaction is benzoate + L-phenylalanine + 2 AH2 + 2 ATP = N-benzoyl-L-phenylalaninol + 2 A + 2 AMP + 2 diphosphate + H(+). It functions in the pathway secondary metabolite biosynthesis. Its function is as follows. Nonribosomal peptide synthase; part of the gene cluster that mediates the biosynthesis of asperphenamate, a rare linear amino acid ester that exhibits antitumor activity towards a number of cell lines. The structure of asperphenamate contains two subunits, N-benzoylphenylalanine and N-benzoylphenylalaninol, which are connected by an inter-molecular ester bond. The first step of asperphenamate biosynthesis is the generation of N-benzoylphenylalaninol by the nonribosomal peptide synthase apmA. Using phenylalanine and benzoic acid as substrates, apmA catalyzes amide bond formation and tethers the intermediate into the NRPS chain. Then, the terminal R domain of apmA catalyzes the reduction reaction to get the shunt product N-benzoylphenylalaninol. Subsequently, the nonribosomal peptide synthase apmB activates the same substrates as does apmA (phenylalanine and benzoic acid) to produce N-benzoylphenylalanine before condensing N-benzoylphenylalanine and N-benzoylphenylalaninol to release asperphenamate. This chain is N-benzoylphenylalaninol synthetase apmA, found in Penicillium brevicompactum.